Consider the following 660-residue polypeptide: MSSICKGDNSDLTEERKNATFDTDKMAAVIYGREEIASRRRQLTESISRIHELAESKPLVFMTREEKIAESCRKLEVLSRHWNQTPFNRDNEEDALHIYREVLGMEGHPLALHDTMFIPTLVAQASQEQQEKWLGRARRKEIIGCYAQTEMGHGTNLRKLETTATYSPDTQEFILNTPTITALKWWPGALGKSSNNAIVVANLLIKDQNYGPHPFMVQLRDEKTHIPLKGIVVGDIGPKMAFNGADNGYLGFNNHRIPRTNLLMRHTKVEANGTYIKPSHAKIGYSSMVKVRSRMAMDQGLFLASALVIAVRYSAVRRQGFLEDKTQKVKVLDYQTQQHRLFPSLARAYAFIFTGFETIHLYSQLLKDVDMGNTSGMADLHALTSGLKSVVTHQTGEGIEQARMACGEHGYSMASYISEIYGVAIGGCTYEGENMVMLLQLARYLVKSVELIKSGEEKKLGPMVSYLAAKGGHPDLSSLNGYVTAFEHMARRQAWKATEKFLKLMETGESREVAWNKSAVELTRASRLHTRLFIIEAFMRRVSRIEDIPVKEVLTDLLHLHVNYELLDVATYALEFMSSTQLDYIRDQLYLYLEKIRPSAVSLVDSFQISDMQLRSVLGRRDGNVYENLFKWAKSSPLNKSDVLPSVDKYLKPMMEKAKL.

FAD is bound by residues Tyr-146 to Thr-149, Gly-154 to Thr-155, and Gly-188. Substrate-binding positions include Lys-282–Tyr-285 and Arg-292. FAD is bound by residues Arg-317 and Gln-337–Arg-340. The ATP site is built by His-339, Ser-389, His-393, and Gln-401. Substrate is bound at residue Tyr-430–Glu-431. The Proton acceptor role is filled by Glu-431. Residue Glu-433 coordinates FAD. ATP-binding positions include Arg-524 to Arg-527 and Tyr-572. The Microbody targeting signal motif lies at Ala-658–Leu-660.

It belongs to the acyl-CoA oxidase family. Forms a heterodimer with acox-1.1; the interaction may be important for the stability of acox-1.3. FAD serves as cofactor.

It is found in the peroxisome. The enzyme catalyses asc-C7-CoA + O2 = asc-DeltaC7-CoA + H2O2. Its pathway is lipid metabolism; peroxisomal fatty acid beta-oxidation. Its activity is regulated as follows. Activated by ATP. ATP binding leads to a conformational change that promotes FAD cofactor binding and enzyme activity. ATP binding likely occurs during acox-1.3 folding and/or dimer formation. In terms of biological role, involved in the first step of peroxisomal beta-oxidation by catalyzing the desaturation of fatty acid-derived side chains of ascaroside pheromones, which regulates development and behavior. Specifically, shortens ascarosides with a 7-carbon side chain (asc-C7). Does not catalyze the desaturation of fatty acids or hydroxylated fatty acids. Involved in the biosynthesis of asc-C6-MK (daumone 2) and asc-delta-C9 (daumone 3) but not asc-C7 (daumone 1); daumones are pheromones produced during unfavourable growth conditions which promote entry into the dauer stage. This chain is Acyl-coenzyme A oxidase acox-1.3, found in Caenorhabditis elegans.